The following is a 484-amino-acid chain: Protein nucleotidyltransferase YdiU (484 aa).

ATP contacts are provided by G81, G83, R84, K103, D115, G116, R166, and R173. D244 acts as the Proton acceptor in catalysis. Residues N245 and D254 each contribute to the Mg(2+) site. D254 contributes to the ATP binding site.

It belongs to the SELO family. Requires Mg(2+) as cofactor. Mn(2+) is required as a cofactor.

The enzyme catalyses L-seryl-[protein] + ATP = 3-O-(5'-adenylyl)-L-seryl-[protein] + diphosphate. It carries out the reaction L-threonyl-[protein] + ATP = 3-O-(5'-adenylyl)-L-threonyl-[protein] + diphosphate. The catalysed reaction is L-tyrosyl-[protein] + ATP = O-(5'-adenylyl)-L-tyrosyl-[protein] + diphosphate. It catalyses the reaction L-histidyl-[protein] + UTP = N(tele)-(5'-uridylyl)-L-histidyl-[protein] + diphosphate. The enzyme catalyses L-seryl-[protein] + UTP = O-(5'-uridylyl)-L-seryl-[protein] + diphosphate. It carries out the reaction L-tyrosyl-[protein] + UTP = O-(5'-uridylyl)-L-tyrosyl-[protein] + diphosphate. In terms of biological role, nucleotidyltransferase involved in the post-translational modification of proteins. It can catalyze the addition of adenosine monophosphate (AMP) or uridine monophosphate (UMP) to a protein, resulting in modifications known as AMPylation and UMPylation. This Shewanella baltica (strain OS223) protein is Protein nucleotidyltransferase YdiU.